The chain runs to 382 residues: Telomere-binding protein OPG082 (382 aa).

Belongs to the orthopoxvirus OPG082 family.

It localises to the virion. Functionally, binds to the hairpin form of the viral telomeric sequence. Might direct genome encapsidation into the virus particle. The sequence is that of Telomere-binding protein OPG082 (OPG082) from Variola virus (isolate Human/India/Ind3/1967) (VARV).